We begin with the raw amino-acid sequence, 241 residues long: Uridylate kinase (241 aa).

Lys15–Gly18 contributes to the ATP binding site. Gly57 contacts UMP. ATP-binding residues include Gly58 and Arg62. Residues Asp77 and Ile139–Thr146 each bind UMP. Thr166, Asn167, Phe172, and Asp175 together coordinate ATP.

This sequence belongs to the UMP kinase family. Homohexamer.

The protein resides in the cytoplasm. The catalysed reaction is UMP + ATP = UDP + ADP. Its pathway is pyrimidine metabolism; CTP biosynthesis via de novo pathway; UDP from UMP (UMPK route): step 1/1. Inhibited by UTP. In terms of biological role, catalyzes the reversible phosphorylation of UMP to UDP. The sequence is that of Uridylate kinase from Wigglesworthia glossinidia brevipalpis.